Reading from the N-terminus, the 82-residue chain is Defensin-like protein 156 (82 aa).

An N-terminal signal peptide occupies residues 1 to 27 (MAKISCSYFLVLMLVFSVFSLVEKTKG). Cystine bridges form between Cys31/Cys77, Cys41/Cys60, Cys46/Cys71, and Cys50/Cys73.

It belongs to the DEFL family. As to expression, expressed in flower buds, but not in stems, roots or rosette leaves.

It is found in the secreted. The sequence is that of Defensin-like protein 156 (LCR21) from Arabidopsis thaliana (Mouse-ear cress).